Consider the following 216-residue polypeptide: Probable nicotinate-nucleotide adenylyltransferase (216 aa).

Belongs to the NadD family.

The enzyme catalyses nicotinate beta-D-ribonucleotide + ATP + H(+) = deamido-NAD(+) + diphosphate. It participates in cofactor biosynthesis; NAD(+) biosynthesis; deamido-NAD(+) from nicotinate D-ribonucleotide: step 1/1. Its function is as follows. Catalyzes the reversible adenylation of nicotinate mononucleotide (NaMN) to nicotinic acid adenine dinucleotide (NaAD). This is Probable nicotinate-nucleotide adenylyltransferase from Pelobacter propionicus (strain DSM 2379 / NBRC 103807 / OttBd1).